The following is a 247-amino-acid chain: NH(3)-dependent NAD(+) synthetase (247 aa).

Residue 29 to 36 (GLSGGVDS) coordinates ATP. Residue D35 participates in Mg(2+) binding. R112 contributes to the deamido-NAD(+) binding site. T132 contacts ATP. Mg(2+) is bound at residue E137. Deamido-NAD(+)-binding residues include K145 and D152. The ATP site is built by K161 and S183. 233 to 234 (HK) is a deamido-NAD(+) binding site.

Belongs to the NAD synthetase family. Homodimer.

The catalysed reaction is deamido-NAD(+) + NH4(+) + ATP = AMP + diphosphate + NAD(+) + H(+). It participates in cofactor biosynthesis; NAD(+) biosynthesis; NAD(+) from deamido-NAD(+) (ammonia route): step 1/1. Catalyzes the ATP-dependent amidation of deamido-NAD to form NAD. Uses ammonia as a nitrogen source. The protein is NH(3)-dependent NAD(+) synthetase of Archaeoglobus fulgidus (strain ATCC 49558 / DSM 4304 / JCM 9628 / NBRC 100126 / VC-16).